The chain runs to 71 residues: UPF0352 protein VCM66_1964 (71 aa).

Belongs to the UPF0352 family.

This Vibrio cholerae serotype O1 (strain M66-2) protein is UPF0352 protein VCM66_1964.